The chain runs to 378 residues: Chitinase (378 aa).

A signal peptide spans 1-28 (MNFTVKYSFLVICLLCCLLSTYVSVIEG). A GH18 domain is found at 53–378 (GIIQGYYPSW…AIEYFVESLH (326 aa)). The Proton donor role is filled by Glu-174. An intrachain disulfide couples Cys-220 to Cys-230.

The protein belongs to the glycosyl hydrolase 18 family. As to quaternary structure, forms a hetero-multimeric, high molecular weight complex composed of at least CHT1, SOAP AND WARP. Within the complex, may interact with WARP via a disulfide bond.

Its subcellular location is the secreted. The protein localises to the cytoplasmic vesicle. The protein resides in the secretory vesicle. It is found in the microneme. It carries out the reaction Random endo-hydrolysis of N-acetyl-beta-D-glucosaminide (1-&gt;4)-beta-linkages in chitin and chitodextrins.. Inhibited by allosamidin. Functionally, endochitinase that cleaves beta-1,4-linkages between tri- and tetramers of N-acetylglucosamine (GlcNAc) from penta- and hexameric chitin oligomers. Does not cleave smaller chitin oligosaccharides. Required to cross the acellular, chitin-containing peritrophic matrix (PM) which is formed around the ingested blood meal in the mosquito midgut allowing the ookinete to invade the mosquito gut epithelium. The polypeptide is Chitinase (Plasmodium falciparum (isolate 3D7)).